The primary structure comprises 57 residues: Putative antitoxin VapB4 (57 aa).

Possibly the antitoxin component of a type II toxin-antitoxin (TA) system. Its cognate toxin is VapC4 (Potential). The sequence is that of Putative antitoxin VapB4 (vapB4) from Methanocaldococcus jannaschii (strain ATCC 43067 / DSM 2661 / JAL-1 / JCM 10045 / NBRC 100440) (Methanococcus jannaschii).